Consider the following 24-residue polypeptide: ASGPCFPNPCQNDGECHVIDDSHR.

It is found in the membrane. The protein resides in the secreted. Its subcellular location is the cytoplasmic vesicle. The protein localises to the secretory vesicle. It localises to the acrosome membrane. Its function is as follows. Specific ligand for the alpha-v/beta-3 and alpha-v/beta-5 receptors. Also binds to phosphatidylserine-enriched cell surfaces in a receptor-independent manner. Zona pellucida-binding protein which may play a role in gamete interaction. Contributes to phagocytic removal of apoptotic cells in many tissues. Plays an important role in the maintenance of intestinal epithelial homeostasis and the promotion of mucosal healing. Promotes VEGF-dependent neovascularization. The chain is Lactadherin from Equus asinus (Donkey).